Reading from the N-terminus, the 153-residue chain is Ribosomal RNA large subunit methyltransferase H (153 aa).

S-adenosyl-L-methionine contacts are provided by residues Leu-75, Gly-102, and 121 to 126 (LSPLTM).

This sequence belongs to the RNA methyltransferase RlmH family. As to quaternary structure, homodimer.

The protein localises to the cytoplasm. It catalyses the reaction pseudouridine(1915) in 23S rRNA + S-adenosyl-L-methionine = N(3)-methylpseudouridine(1915) in 23S rRNA + S-adenosyl-L-homocysteine + H(+). Functionally, specifically methylates the pseudouridine at position 1915 (m3Psi1915) in 23S rRNA. This chain is Ribosomal RNA large subunit methyltransferase H, found in Nitratiruptor sp. (strain SB155-2).